A 452-amino-acid chain; its full sequence is Phosphoglucosamine mutase (452 aa).

The active-site Phosphoserine intermediate is the serine 112. 4 residues coordinate Mg(2+): serine 112, aspartate 251, aspartate 253, and aspartate 255. The residue at position 112 (serine 112) is a Phosphoserine.

It belongs to the phosphohexose mutase family. It depends on Mg(2+) as a cofactor. Activated by phosphorylation.

It carries out the reaction alpha-D-glucosamine 1-phosphate = D-glucosamine 6-phosphate. Its function is as follows. Catalyzes the conversion of glucosamine-6-phosphate to glucosamine-1-phosphate. This Bordetella bronchiseptica (strain ATCC BAA-588 / NCTC 13252 / RB50) (Alcaligenes bronchisepticus) protein is Phosphoglucosamine mutase.